The primary structure comprises 172 residues: Inorganic pyrophosphatase (172 aa).

The substrate site is built by K26, R40, and Y52. Mg(2+) is bound by residues D62, D67, and D99. Y138 contributes to the substrate binding site.

The protein belongs to the PPase family. As to quaternary structure, homohexamer. Mg(2+) is required as a cofactor.

The protein localises to the cytoplasm. The catalysed reaction is diphosphate + H2O = 2 phosphate + H(+). Catalyzes the hydrolysis of inorganic pyrophosphate (PPi) forming two phosphate ions. This is Inorganic pyrophosphatase from Saccharolobus solfataricus (strain ATCC 35092 / DSM 1617 / JCM 11322 / P2) (Sulfolobus solfataricus).